The sequence spans 269 residues: GTP cyclohydrolase FolE2 2 (269 aa).

Belongs to the GTP cyclohydrolase IV family.

It catalyses the reaction GTP + H2O = 7,8-dihydroneopterin 3'-triphosphate + formate + H(+). It participates in cofactor biosynthesis; 7,8-dihydroneopterin triphosphate biosynthesis; 7,8-dihydroneopterin triphosphate from GTP: step 1/1. Converts GTP to 7,8-dihydroneopterin triphosphate. This chain is GTP cyclohydrolase FolE2 2, found in Burkholderia lata (strain ATCC 17760 / DSM 23089 / LMG 22485 / NCIMB 9086 / R18194 / 383).